The sequence spans 264 residues: MPKHSALERAWPAKEIVEDLLELRKRSPLTHIMTNIVVTNWTANVLLAVGASPAMVIAEEEAGEFVKIANGLLINVGTITSNDAKAMKIAATVAHQTNTPWVLDPVAVGALGFRTETTKKLLDLKPTVIRGNASEILTLAGIAGKGKGVDSTVNSKDALPYAQELSGKTGAVVAVSGEVDYVTNGKETIEIYGGDPIMTKVTGVGCSLGALIASFLGIQKDPLRASASASAVFAIAGSRSAKKSNGPGSFAINFIDQLSQLSIE.

Met-55 provides a ligand contact to substrate. Residues Arg-130 and Ser-176 each contribute to the ATP site. Gly-203 contacts substrate.

The protein belongs to the Thz kinase family. It depends on Mg(2+) as a cofactor.

The catalysed reaction is 5-(2-hydroxyethyl)-4-methylthiazole + ATP = 4-methyl-5-(2-phosphooxyethyl)-thiazole + ADP + H(+). It participates in cofactor biosynthesis; thiamine diphosphate biosynthesis; 4-methyl-5-(2-phosphoethyl)-thiazole from 5-(2-hydroxyethyl)-4-methylthiazole: step 1/1. In terms of biological role, catalyzes the phosphorylation of the hydroxyl group of 4-methyl-5-beta-hydroxyethylthiazole (THZ). In Leptospira borgpetersenii serovar Hardjo-bovis (strain JB197), this protein is Hydroxyethylthiazole kinase.